The chain runs to 375 residues: Elongation factor Tu (375 aa).

Residues 10–205 enclose the tr-type G domain; sequence KPHINVGAIG…TMDKYFVIPE (196 aa). Positions 19 to 26 are G1; the sequence is GHVDHGKT. Residue 19 to 26 coordinates GTP; the sequence is GHVDHGKT. Thr-26 lines the Mg(2+) pocket. The interval 60-64 is G2; that stretch reads GITIN. A G3 region spans residues 81–84; that stretch reads DCPG. GTP contacts are provided by residues 81 to 85 and 136 to 139; these read DCPGH and NKMD. The segment at 136 to 139 is G4; the sequence is NKMD. Residues 173–175 form a G5 region; sequence SAF.

This sequence belongs to the TRAFAC class translation factor GTPase superfamily. Classic translation factor GTPase family. EF-Tu/EF-1A subfamily. As to quaternary structure, monomer.

The protein resides in the cytoplasm. The catalysed reaction is GTP + H2O = GDP + phosphate + H(+). Its function is as follows. GTP hydrolase that promotes the GTP-dependent binding of aminoacyl-tRNA to the A-site of ribosomes during protein biosynthesis. This Spirochaeta aurantia protein is Elongation factor Tu (tuf).